The primary structure comprises 388 residues: S-adenosylmethionine synthase (388 aa).

H16 provides a ligand contact to ATP. A Mg(2+)-binding site is contributed by D18. E44 lines the K(+) pocket. Positions 57 and 100 each coordinate L-methionine. The flexible loop stretch occupies residues 100 to 110 (QSADIAQGVNE). ATP is bound by residues 167 to 169 (DAK), 233 to 234 (RF), D242, 248 to 249 (RK), A265, and K269. Position 242 (D242) interacts with L-methionine. Residue K273 participates in L-methionine binding.

This sequence belongs to the AdoMet synthase family. Homotetramer; dimer of dimers. It depends on Mg(2+) as a cofactor. K(+) is required as a cofactor.

The protein resides in the cytoplasm. It carries out the reaction L-methionine + ATP + H2O = S-adenosyl-L-methionine + phosphate + diphosphate. Its pathway is amino-acid biosynthesis; S-adenosyl-L-methionine biosynthesis; S-adenosyl-L-methionine from L-methionine: step 1/1. Its function is as follows. Catalyzes the formation of S-adenosylmethionine (AdoMet) from methionine and ATP. The overall synthetic reaction is composed of two sequential steps, AdoMet formation and the subsequent tripolyphosphate hydrolysis which occurs prior to release of AdoMet from the enzyme. The chain is S-adenosylmethionine synthase from Aromatoleum aromaticum (strain DSM 19018 / LMG 30748 / EbN1) (Azoarcus sp. (strain EbN1)).